Reading from the N-terminus, the 156-residue chain is Deoxyuridine 5'-triphosphate nucleotidohydrolase (156 aa).

Substrate is bound by residues 76 to 78, Asn-89, 93 to 95, and Lys-103; these read RSG and TVD.

This sequence belongs to the dUTPase family. It depends on Mg(2+) as a cofactor.

The catalysed reaction is dUTP + H2O = dUMP + diphosphate + H(+). The protein operates within pyrimidine metabolism; dUMP biosynthesis; dUMP from dCTP (dUTP route): step 2/2. Functionally, this enzyme is involved in nucleotide metabolism: it produces dUMP, the immediate precursor of thymidine nucleotides and it decreases the intracellular concentration of dUTP so that uracil cannot be incorporated into DNA. In Agrobacterium fabrum (strain C58 / ATCC 33970) (Agrobacterium tumefaciens (strain C58)), this protein is Deoxyuridine 5'-triphosphate nucleotidohydrolase.